We begin with the raw amino-acid sequence, 929 residues long: Isoleucine--tRNA ligase (929 aa).

A 'HIGH' region motif is present at residues Pro58–His68. An L-isoleucyl-5'-AMP-binding site is contributed by Glu563. A 'KMSKS' region motif is present at residues Lys605–Ser609. ATP is bound at residue Lys608. Residues Cys892, Cys895, Cys912, and Cys915 each contribute to the Zn(2+) site.

This sequence belongs to the class-I aminoacyl-tRNA synthetase family. IleS type 1 subfamily. In terms of assembly, monomer. Requires Zn(2+) as cofactor.

Its subcellular location is the cytoplasm. The enzyme catalyses tRNA(Ile) + L-isoleucine + ATP = L-isoleucyl-tRNA(Ile) + AMP + diphosphate. Functionally, catalyzes the attachment of isoleucine to tRNA(Ile). As IleRS can inadvertently accommodate and process structurally similar amino acids such as valine, to avoid such errors it has two additional distinct tRNA(Ile)-dependent editing activities. One activity is designated as 'pretransfer' editing and involves the hydrolysis of activated Val-AMP. The other activity is designated 'posttransfer' editing and involves deacylation of mischarged Val-tRNA(Ile). The sequence is that of Isoleucine--tRNA ligase from Neisseria meningitidis serogroup B (strain ATCC BAA-335 / MC58).